An 855-amino-acid polypeptide reads, in one-letter code: DNA mismatch repair protein MutS (855 aa).

615–622 contributes to the ATP binding site; sequence GPNMGGKS.

It belongs to the DNA mismatch repair MutS family.

This protein is involved in the repair of mismatches in DNA. It is possible that it carries out the mismatch recognition step. This protein has a weak ATPase activity. The sequence is that of DNA mismatch repair protein MutS from Aliivibrio salmonicida (strain LFI1238) (Vibrio salmonicida (strain LFI1238)).